The following is a 78-amino-acid chain: Translation initiation factor IF-1 (78 aa).

Residues 2–78 (SKNNLNETES…TQARITYRFK (77 aa)) enclose the S1-like domain.

The protein belongs to the IF-1 family. As to quaternary structure, component of the 30S ribosomal translation pre-initiation complex which assembles on the 30S ribosome in the order IF-2 and IF-3, IF-1 and N-formylmethionyl-tRNA(fMet); mRNA recruitment can occur at any time during PIC assembly.

It localises to the cytoplasm. Its function is as follows. One of the essential components for the initiation of protein synthesis. Stabilizes the binding of IF-2 and IF-3 on the 30S subunit to which N-formylmethionyl-tRNA(fMet) subsequently binds. Helps modulate mRNA selection, yielding the 30S pre-initiation complex (PIC). Upon addition of the 50S ribosomal subunit IF-1, IF-2 and IF-3 are released leaving the mature 70S translation initiation complex. The sequence is that of Translation initiation factor IF-1 from Aster yellows witches'-broom phytoplasma (strain AYWB).